The sequence spans 495 residues: MSNNKKLTSLFGAPVSDRENSMTAGPRGPLVMQDWYFLEQMAHFDREVIPERRMHAKGSGAFGTFTVTNDITQYTSASIFSEVGKQTEMFARFSTVAGERGAADAERDIRGFALKFYTDEGNWDLVGNNTPVFFFRDPKLFASLNHAVKRDPRTNMRSAQNNWDFWTSLPEALHQVTILMSDRGIPKGYRNMHGFGSHTYSMYNDKGERVWVKFHHRTQQGIENLQPDEAAKIIADDRESSQRDLFEAIENKDYPKWKTYIQVMTEEQARNHKDNPFDLTKVWYKGDYPLIEVGEWELNRNPDNYFQDVEQAAFAPTNIVPGIDFSPDKMLQGRLFSYGDAQRYRLGVNHWQIPVNQPKGVGVENICPFSRDGQMRILDNNQGGGTHYYPNSDGSFEDQPEFKKPGLKVEGEAYEYDFRQDDDNYFEQPGRLFRLQSKEQQERIFENTANEMQGTTLEVQHRHIRHCYKADSEYGKGVARALGVDINDVDLEIKD.

Residues 1-25 (MSNNKKLTSLFGAPVSDRENSMTAG) are disordered. Catalysis depends on residues His55 and Asn128. Tyr338 lines the heme pocket.

It belongs to the catalase family. In terms of assembly, homodimer. Requires heme as cofactor.

It carries out the reaction 2 H2O2 = O2 + 2 H2O. Its function is as follows. Decomposes hydrogen peroxide into water and oxygen; serves to protect cells from the toxic effects of hydrogen peroxide. This chain is Catalase B (katB), found in Staphylococcus xylosus.